A 124-amino-acid polypeptide reads, in one-letter code: Outer dense fiber protein 2 (124 aa).

A coiled-coil region spans residues 13 to 124 (KEDSERLMEQ…EAIMEQLKEL (112 aa)).

The protein belongs to the ODF2 family. As to quaternary structure, self-associates. Associates with microtubules and forms a fibrillar structure partially linked to the microtubule network. Interacts through its C-terminus with PLK1. Interacts with ODF1. Interacts with MARK4; the interaction is required for localization of ODF2 to centrioles. Interacts with TSSK4. Interacts with AKNA. Interacts with QRICH2. Interacts with CFAP58. Interacts with BBOF1. Interacts with CCDC38. Interacts with CCDC42. Tyrosine phosphorylated. In terms of tissue distribution, detected in sperm flagella (at protein level).

Its subcellular location is the cytoplasm. The protein resides in the cytoskeleton. It is found in the microtubule organizing center. It localises to the centrosome. The protein localises to the cell projection. Its subcellular location is the cilium. The protein resides in the centriole. It is found in the spindle pole. It localises to the flagellum. Functionally, seems to be a major component of sperm tail outer dense fibers (ODF). ODFs are filamentous structures located on the outside of the axoneme in the midpiece and principal piece of the mammalian sperm tail and may help to maintain the passive elastic structures and elastic recoil of the sperm tail. May have a modulating influence on sperm motility. Functions as a general scaffold protein that is specifically localized at the distal/subdistal appendages of mother centrioles. Component of the centrosome matrix required for the localization of PLK1 and NIN to the centrosomes. Required for the formation and/or maintenance of normal CETN1 assembly. The protein is Outer dense fiber protein 2 of Mesocricetus auratus (Golden hamster).